The sequence spans 224 residues: uncharacterized protein (224 aa).

A 4Fe-4S domain is found at 9–68 (SKMVDVNEITKYLPGFNCGACGYKRCDLFAEALLNKDVKLEDCPFLLRERFKENYEKLKE). [4Fe-4S] cluster-binding residues include C26, C29, C34, and C51.

Requires [4Fe-4S] cluster as cofactor.

This is an uncharacterized protein from Methanocaldococcus jannaschii (strain ATCC 43067 / DSM 2661 / JAL-1 / JCM 10045 / NBRC 100440) (Methanococcus jannaschii).